A 303-amino-acid polypeptide reads, in one-letter code: N-acetyl-D-glucosamine kinase (303 aa).

ATP contacts are provided by residues 4-11 and 133-140; these read GFDIGGTK and GVGGGLVL. Residues histidine 157, cysteine 177, cysteine 179, and cysteine 184 each contribute to the Zn(2+) site.

It belongs to the ROK (NagC/XylR) family. NagK subfamily.

It catalyses the reaction N-acetyl-D-glucosamine + ATP = N-acetyl-D-glucosamine 6-phosphate + ADP + H(+). It functions in the pathway cell wall biogenesis; peptidoglycan recycling. Functionally, catalyzes the phosphorylation of N-acetyl-D-glucosamine (GlcNAc) derived from cell-wall degradation, yielding GlcNAc-6-P. This chain is N-acetyl-D-glucosamine kinase, found in Citrobacter koseri (strain ATCC BAA-895 / CDC 4225-83 / SGSC4696).